Here is a 163-residue protein sequence, read N- to C-terminus: tRNA-acetylating toxin 2 (163 aa).

9 residues coordinate acetyl-CoA: leucine 89, valine 91, histidine 96, glycine 97, glutamine 98, glycine 99, alanine 101, arginine 102, and glutamate 132. Residue tyrosine 137 is part of the active site. Arginine 139 provides a ligand contact to acetyl-CoA.

It belongs to the acetyltransferase family. GNAT subfamily. Homodimer (in absence of antitoxin). Forms a complex with cognate antitoxin TacA2. Forms a 4:2 antitoxin:toxin complex with cognate antitoxin TacA2.

It catalyses the reaction glycyl-tRNA(Gly) + acetyl-CoA = N-acetylglycyl-tRNA(Gly) + CoA + H(+). Toxic component of a type II toxin-antitoxin (TA) system. Acetylates tRNA and inhibits translation. Acetylates exclusively Gly in situ. Overexpression during the lag phase of a tacA2-tacT2 deletion strain leads to very small increase in persister cells in the presence of cefotaxime but no detectable growth phenotype in absence of antibiotics. Compared to a protein with a single amino acid change (TacT2 from S.enterica NCTC 13349, Glu-29 is Lys in NCTC 13349) this protein binds tRNA very poorly and acetylates tRNA very poorly. Persister cell formation is neutralized by cognate antitoxin TacA2. Neutralized only by cognate antitoxin TacA2 (A8), but not by TacA1 or TacA3. Plays a role in persister cell formation. Its function is as follows. The TacA2-TacT2 complex both represses and derepresses expression of its own operon. This is tRNA-acetylating toxin 2 from Salmonella typhimurium (strain 14028s / SGSC 2262).